The primary structure comprises 144 residues: Large ribosomal subunit protein uL15 (144 aa).

The interval 1-52 is disordered; it reads MKLHTLKSTPGARVEKHRVGRGHAAGKGKQAGKGQSGQNKRHGHRLGFEGGQ. Positions 15-26 are enriched in basic residues; that stretch reads EKHRVGRGHAAG.

It belongs to the universal ribosomal protein uL15 family. Part of the 50S ribosomal subunit.

Its function is as follows. Binds to the 23S rRNA. This Mycoplasmopsis agalactiae (strain NCTC 10123 / CIP 59.7 / PG2) (Mycoplasma agalactiae) protein is Large ribosomal subunit protein uL15.